A 229-amino-acid polypeptide reads, in one-letter code: Cytochrome c oxidase subunit 2 (229 aa).

Residues 1 to 26 are Mitochondrial intermembrane-facing; that stretch reads MSTWANLGLQDSASPLMEQLIFFHDH. Residues 27-48 traverse the membrane as a helical segment; that stretch reads ALLILVMITVLVGYLMFMLFFN. The Mitochondrial matrix portion of the chain corresponds to 49-62; the sequence is SYVNRFLLHGQLIE. The chain crosses the membrane as a helical span at residues 63–82; sequence MIWTILPAIILLFIAMPSLR. Over 83–229 the chain is Mitochondrial intermembrane; sequence LLYLLDEINE…IKWISNSVNS (147 aa). Residues His-161, Cys-196, Glu-198, Cys-200, His-204, and Met-207 each contribute to the Cu cation site. Residue Glu-198 coordinates Mg(2+).

This sequence belongs to the cytochrome c oxidase subunit 2 family. Component of the cytochrome c oxidase (complex IV, CIV), a multisubunit enzyme composed of a catalytic core of 3 subunits and several supernumerary subunits. The complex exists as a monomer or a dimer and forms supercomplexes (SCs) in the inner mitochondrial membrane with ubiquinol-cytochrome c oxidoreductase (cytochrome b-c1 complex, complex III, CIII). Requires Cu cation as cofactor.

The protein localises to the mitochondrion inner membrane. The enzyme catalyses 4 Fe(II)-[cytochrome c] + O2 + 8 H(+)(in) = 4 Fe(III)-[cytochrome c] + 2 H2O + 4 H(+)(out). Functionally, component of the cytochrome c oxidase, the last enzyme in the mitochondrial electron transport chain which drives oxidative phosphorylation. The respiratory chain contains 3 multisubunit complexes succinate dehydrogenase (complex II, CII), ubiquinol-cytochrome c oxidoreductase (cytochrome b-c1 complex, complex III, CIII) and cytochrome c oxidase (complex IV, CIV), that cooperate to transfer electrons derived from NADH and succinate to molecular oxygen, creating an electrochemical gradient over the inner membrane that drives transmembrane transport and the ATP synthase. Cytochrome c oxidase is the component of the respiratory chain that catalyzes the reduction of oxygen to water. Electrons originating from reduced cytochrome c in the intermembrane space (IMS) are transferred via the dinuclear copper A center (CU(A)) of subunit 2 and heme A of subunit 1 to the active site in subunit 1, a binuclear center (BNC) formed by heme A3 and copper B (CU(B)). The BNC reduces molecular oxygen to 2 water molecules using 4 electrons from cytochrome c in the IMS and 4 protons from the mitochondrial matrix. The protein is Cytochrome c oxidase subunit 2 (mt:CoII) of Drosophila affinis (Fruit fly).